A 604-amino-acid polypeptide reads, in one-letter code: MSENLIGYIDDQGNIIDTQSAGENCTARPIEFDNSEKSLEIIRHSTAHLMAQAIKELYPDAQFFVGPVVDEGFYYDFRVNEKIGEEDLKTIEKKMKELIKKKYKIEKYEISKDEALKKFANDDLKQAVLSRIPDETVSIYKQGDFEDLCRGPHVPALRFLHNFKLTRVAGAYLGGDENAEMLTRIYGIAFADKESLKSYLKMMEEAKKRDHRKIGTEMELFMFNEESGAGLPFWMPQGAKLRYKLEQILHKAHLVRDYEPVRGPEILKADMWRTSGHYACYGENMYLTEIDGQEYGIKPMNCIGHIQIFKQTQKSYRDLPVKYYEYGVVHRHEKSGVLHGLLRVREFTQDDAHIFCAPEQIASEVLEVVEFVDSVMKLFEFEYTMEISTKPEKAIGDDEVWETATQGLKDALKGNDLPYTIDEGGGAFYGPKIDIKITDAIGRKWQCGTIQVDFNLPERFDVEYVAEDNSRKRPVMLHRAILGSFERFIGILTEHYAGEFPFFIAPTQVIFVPISEGHAGYAYGLKKKLMLEGIDSEVSDKNDSLNKRIRTAEKQRVPYVVIIGDEEVQNNTVAIRNRRTREQYNLTQDEFMVELTKQLQEGKI.

The interval Asp210–Pro501 is catalytic. The Zn(2+) site is built by Cys302, His353, and His478.

This sequence belongs to the class-II aminoacyl-tRNA synthetase family. As to quaternary structure, homodimer. It depends on Zn(2+) as a cofactor.

The protein resides in the cytoplasm. It carries out the reaction tRNA(Thr) + L-threonine + ATP = L-threonyl-tRNA(Thr) + AMP + diphosphate + H(+). Its function is as follows. Catalyzes the attachment of threonine to tRNA(Thr) in a two-step reaction: L-threonine is first activated by ATP to form Thr-AMP and then transferred to the acceptor end of tRNA(Thr). Also edits incorrectly charged L-seryl-tRNA(Thr). The chain is Threonine--tRNA ligase from Sulfurovum sp. (strain NBC37-1).